Here is a 216-residue protein sequence, read N- to C-terminus: uncharacterized protein (216 aa).

The HTH cro/C1-type domain occupies 8 to 63; that stretch reads LKTLMTSVHINASELARRTGIAQPIIHRLSTGQNTNPKLATIKPIARYFMVNISQL. A DNA-binding region (H-T-H motif) is located at residues 19–38; sequence ASELARRTGIAQPIIHRLST.

This is an uncharacterized protein from Coxiella burnetii (strain RSA 493 / Nine Mile phase I).